The chain runs to 631 residues: 1-deoxy-D-xylulose-5-phosphate synthase (631 aa).

Residues His-76 and 117 to 119 (AHS) contribute to the thiamine diphosphate site. Asp-148 contributes to the Mg(2+) binding site. Thiamine diphosphate contacts are provided by residues 149 to 150 (GA), Asn-177, Tyr-284, and Glu-365. Asn-177 lines the Mg(2+) pocket.

The protein belongs to the transketolase family. DXPS subfamily. Homodimer. Mg(2+) is required as a cofactor. Requires thiamine diphosphate as cofactor.

It carries out the reaction D-glyceraldehyde 3-phosphate + pyruvate + H(+) = 1-deoxy-D-xylulose 5-phosphate + CO2. Its pathway is metabolic intermediate biosynthesis; 1-deoxy-D-xylulose 5-phosphate biosynthesis; 1-deoxy-D-xylulose 5-phosphate from D-glyceraldehyde 3-phosphate and pyruvate: step 1/1. Catalyzes the acyloin condensation reaction between C atoms 2 and 3 of pyruvate and glyceraldehyde 3-phosphate to yield 1-deoxy-D-xylulose-5-phosphate (DXP). The polypeptide is 1-deoxy-D-xylulose-5-phosphate synthase (Methylibium petroleiphilum (strain ATCC BAA-1232 / LMG 22953 / PM1)).